The primary structure comprises 255 residues: Probable septum site-determining protein MinC (255 aa).

The segment covering 103 to 115 has biased composition (basic and acidic residues); it reads SHGRRPRGERSEE. The segment at 103–136 is disordered; that stretch reads SHGRRPRGERSEEAAEAVPAAAEPVPAPAASPAP. Residues 127-136 are compositionally biased toward pro residues; the sequence is VPAPAASPAP.

The protein belongs to the MinC family. In terms of assembly, interacts with MinD and FtsZ.

Its function is as follows. Cell division inhibitor that blocks the formation of polar Z ring septums. Rapidly oscillates between the poles of the cell to destabilize FtsZ filaments that have formed before they mature into polar Z rings. Prevents FtsZ polymerization. The chain is Probable septum site-determining protein MinC from Ralstonia nicotianae (strain ATCC BAA-1114 / GMI1000) (Ralstonia solanacearum).